Here is a 315-residue protein sequence, read N- to C-terminus: MIDAVVVSRNDEAQDICSFELAAVDGSLLRFSAGAHIDVHLPEGQVRQYSLCNHPEERHRYLIGVLKDPASRGGSRSLHEQIHNGARLRISAPRNLFPLAQGARRSLLFAGGIGITPILCMAEQLAASADFELHYCARSSERAAFIERMRGAAFADRLFVHFDEQPETALDIAQVLANPQADVHLYVCGPGGFMQHVLESAKAQGWQEACLHREYFAAAPVDTQGDGSFSVQLNSTGQVFEVPADQSVVHVLEQHGIAIAMSCEQGICGTCLTRVLSGTPEASRPVFLTEQEQALNDQFTPCCSRSKTPLLVLDL.

1-94 (MIDAVVVSRN…GARLRISAPR (94 aa)) contributes to the FMN binding site. In terms of domain architecture, FAD-binding FR-type spans 1–100 (MIDAVVVSRN…SAPRNLFPLA (100 aa)). Residue 104-217 (RRSLLFAGGI…EACLHREYFA (114 aa)) coordinates NAD(+). A 2Fe-2S ferredoxin-type domain is found at 227–315 (GSFSVQLNST…SKTPLLVLDL (89 aa)). 4 residues coordinate [2Fe-2S] cluster: Cys263, Cys268, Cys271, and Cys303.

The protein belongs to the PDR/VanB family. FMN is required as a cofactor.

Its pathway is xenobiotic degradation; vanillyl-alcohol degradation. In Pseudomonas putida (Arthrobacter siderocapsulatus), this protein is Vanillate O-demethylase oxidoreductase (vanB).